We begin with the raw amino-acid sequence, 298 residues long: GTPase Era (298 aa).

The Era-type G domain maps to 7–174; that stretch reads RSGFVSIIGR…VELVRKALPQ (168 aa). Residues 15-22 are G1; that stretch reads GRPNVGKS. 15-22 serves as a coordination point for GTP; sequence GRPNVGKS. Residues 41–45 form a G2 region; that stretch reads QTTRN. Positions 62 to 65 are G3; that stretch reads DTPG. Residues 62 to 66 and 124 to 127 contribute to the GTP site; these read DTPGI and NKVD. Residues 124-127 form a G4 region; it reads NKVD. The interval 153-155 is G5; it reads ISA. Residues 205–283 enclose the KH type-2 domain; sequence TRDEVPYATA…FLELFVRVRK (79 aa).

The protein belongs to the TRAFAC class TrmE-Era-EngA-EngB-Septin-like GTPase superfamily. Era GTPase family. Monomer.

It localises to the cytoplasm. Its subcellular location is the cell inner membrane. In terms of biological role, an essential GTPase that binds both GDP and GTP, with rapid nucleotide exchange. Plays a role in 16S rRNA processing and 30S ribosomal subunit biogenesis and possibly also in cell cycle regulation and energy metabolism. This chain is GTPase Era, found in Geobacter metallireducens (strain ATCC 53774 / DSM 7210 / GS-15).